Consider the following 43-residue polypeptide: Photosystem I reaction center subunit IX (43 aa).

A helical membrane pass occupies residues 7 to 27 (YLSVAPVLSALWFGALAGLLI).

It belongs to the PsaJ family.

The protein localises to the plastid. It localises to the chloroplast thylakoid membrane. May help in the organization of the PsaE and PsaF subunits. This is Photosystem I reaction center subunit IX from Oenothera argillicola (Appalachian evening primrose).